The primary structure comprises 171 residues: Plastocyanin minor isoform, chloroplastic (171 aa).

Positions 73–171 (MEVLLGSDDG…AGMVGKLTVK (99 aa)) constitute a Plastocyanin-like domain. Residues His-109, Cys-156, His-159, and Met-164 each coordinate Cu cation.

It belongs to the plastocyanin family. It depends on Cu(2+) as a cofactor.

It localises to the plastid. The protein resides in the chloroplast thylakoid membrane. In terms of biological role, participates in electron transfer between P700 and the cytochrome b6-f complex in photosystem I. Seems to be a minor plastocyanin in Arabidopsis. In Arabidopsis thaliana (Mouse-ear cress), this protein is Plastocyanin minor isoform, chloroplastic (PETE).